Reading from the N-terminus, the 167-residue chain is 3-isopropylmalate dehydratase small subunit (167 aa).

This sequence belongs to the LeuD family. LeuD type 2 subfamily. As to quaternary structure, heterodimer of LeuC and LeuD.

It catalyses the reaction (2R,3S)-3-isopropylmalate = (2S)-2-isopropylmalate. The protein operates within amino-acid biosynthesis; L-leucine biosynthesis; L-leucine from 3-methyl-2-oxobutanoate: step 2/4. In terms of biological role, catalyzes the isomerization between 2-isopropylmalate and 3-isopropylmalate, via the formation of 2-isopropylmaleate. The sequence is that of 3-isopropylmalate dehydratase small subunit from Sulfurimonas denitrificans (strain ATCC 33889 / DSM 1251) (Thiomicrospira denitrificans (strain ATCC 33889 / DSM 1251)).